The chain runs to 272 residues: Proteasome subunit beta (272 aa).

The propeptide at M1 to A47 is removed in mature form; by autocatalysis. The active-site Nucleophile is T48.

It belongs to the peptidase T1B family. In terms of assembly, the 20S proteasome core is composed of 14 alpha and 14 beta subunits that assemble into four stacked heptameric rings, resulting in a barrel-shaped structure. The two inner rings, each composed of seven catalytic beta subunits, are sandwiched by two outer rings, each composed of seven alpha subunits. The catalytic chamber with the active sites is on the inside of the barrel. Has a gated structure, the ends of the cylinder being occluded by the N-termini of the alpha-subunits. Is capped by the proteasome-associated ATPase, ARC.

The protein resides in the cytoplasm. It catalyses the reaction Cleavage of peptide bonds with very broad specificity.. It functions in the pathway protein degradation; proteasomal Pup-dependent pathway. The formation of the proteasomal ATPase ARC-20S proteasome complex, likely via the docking of the C-termini of ARC into the intersubunit pockets in the alpha-rings, may trigger opening of the gate for substrate entry. Interconversion between the open-gate and close-gate conformations leads to a dynamic regulation of the 20S proteasome proteolysis activity. Component of the proteasome core, a large protease complex with broad specificity involved in protein degradation. The protein is Proteasome subunit beta of Beutenbergia cavernae (strain ATCC BAA-8 / DSM 12333 / CCUG 43141 / JCM 11478 / NBRC 16432 / NCIMB 13614 / HKI 0122).